Consider the following 73-residue polypeptide: Putative membrane protein insertion efficiency factor (73 aa).

This sequence belongs to the UPF0161 family.

The protein resides in the cell inner membrane. Its function is as follows. Could be involved in insertion of integral membrane proteins into the membrane. In Jannaschia sp. (strain CCS1), this protein is Putative membrane protein insertion efficiency factor.